The sequence spans 478 residues: Dynein regulatory complex subunit 4 (478 aa).

Over residues 1 to 12 (MAPKRRGKKGKA) the composition is skewed to basic residues. Residues 1–32 (MAPKRRGKKGKAKGNAVVDGVAPEDMSKEQVE) form a disordered region. The regulates microtubule-binding stretch occupies residues 1 to 114 (MAPKRRGKKG…LLYEHQNNLA (114 aa)). 2 coiled-coil regions span residues 24-201 (EDMS…DELD) and 243-427 (NNLA…LARV). The interval 115 to 258 (EVKTEGTVVM…NSLKEQMEDM (144 aa)) is microtubule-binding. The interaction with SMO stretch occupies residues 357 to 478 (QQKTGFKNLV…GPAGLVGAPT (122 aa)).

The protein belongs to the DRC4 family. As to quaternary structure, component of the nexin-dynein regulatory complex (N-DRC). Interacts with microtubules. Interacts with SMO. Interacts (via coiled-coil domains) with RAB3B (in GTP-bound form). Interacts with DRC1. Interacts with DRC7.

The protein localises to the cytoplasm. Its subcellular location is the cytoskeleton. It is found in the cell projection. The protein resides in the cilium. It localises to the flagellum. The protein localises to the cilium axoneme. Its subcellular location is the cilium basal body. It is found in the golgi apparatus. The protein resides in the flagellum axoneme. Functionally, component of the nexin-dynein regulatory complex (N-DRC), a key regulator of ciliary/flagellar motility which maintains the alignment and integrity of the distal axoneme and regulates microtubule sliding in motile axonemes. Plays an important role in the assembly of the N-DRC linker. Plays dual roles at both the primary (or non-motile) cilia to regulate hedgehog signaling and in motile cilia to coordinate cilia movement. Required for proper motile cilia functioning. Positively regulates ciliary smoothened (SMO)-dependent Hedgehog (Hh) signaling pathway by facilitating the trafficking of SMO into the cilium and the stimulation of SMO activity in a GRK2-dependent manner. In Rattus norvegicus (Rat), this protein is Dynein regulatory complex subunit 4 (Gas8).